The chain runs to 323 residues: Viral cathepsin (323 aa).

The signal sequence occupies residues Met-1–Ser-16. Positions Ala-17–Gly-112 are cleaved as a propeptide — activation peptide. Disulfide bonds link Cys-133–Cys-174, Cys-167–Cys-207, and Cys-262–Cys-310. Cys-136 is a catalytic residue. Asn-158 carries N-linked (GlcNAc...) asparagine; by host glycosylation. Residues His-269 and Asn-289 contribute to the active site.

The protein belongs to the peptidase C1 family. Interacts with chitinase/CHIA; this interaction maintains VCATH in the host endoplasmic reticulum. Synthesized as an inactive proenzyme and activated by proteolytic removal of the inhibitory propeptide.

It is found in the host endoplasmic reticulum. It carries out the reaction Endopeptidase of broad specificity, hydrolyzing substrates of both cathepsin L and cathepsin B.. In terms of biological role, cysteine protease that plays an essential role in host liquefaction to facilitate horizontal transmission of the virus. Accumulates within infected cells as an inactive proenzyme (proV-CATH), which is activated by proteolytic cleavage upon cell death. The sequence is that of Viral cathepsin (VCATH) from Lepidoptera (butterflies and moths).